The sequence spans 518 residues: Putative cytochrome P450 CYP13A6 (518 aa).

C463 is a binding site for heme.

Belongs to the cytochrome P450 family. Heme is required as a cofactor.

Cytochromes P450 are a group of heme-thiolate monooxygenases. They oxidize a variety of structurally unrelated compounds, including steroids, fatty acids, and xenobiotics. The sequence is that of Putative cytochrome P450 CYP13A6 (cyp-13A6) from Caenorhabditis elegans.